The primary structure comprises 154 residues: MKIYEGKLIAEGKKFGIVVSRFNEFITNKLLEGALDALKRHGALNEDIEIAWVPGAFEIPLIAKKMAESKRYDAVIALGAVIRGETPHFDYVANEVSKGIAKISLDTEVPVIFGVLTTDTIEQAIVRAGTKGGNKGFEAAVTAIEMANLMEEIK.

Residues Phe22, 56 to 58 (AFE), and 80 to 82 (AVI) contribute to the 5-amino-6-(D-ribitylamino)uracil site. 85–86 (ET) contributes to the (2S)-2-hydroxy-3-oxobutyl phosphate binding site. The Proton donor role is filled by His88. Phe113 contributes to the 5-amino-6-(D-ribitylamino)uracil binding site. A (2S)-2-hydroxy-3-oxobutyl phosphate-binding site is contributed by Arg127.

This sequence belongs to the DMRL synthase family.

It catalyses the reaction (2S)-2-hydroxy-3-oxobutyl phosphate + 5-amino-6-(D-ribitylamino)uracil = 6,7-dimethyl-8-(1-D-ribityl)lumazine + phosphate + 2 H2O + H(+). It participates in cofactor biosynthesis; riboflavin biosynthesis; riboflavin from 2-hydroxy-3-oxobutyl phosphate and 5-amino-6-(D-ribitylamino)uracil: step 1/2. Functionally, catalyzes the formation of 6,7-dimethyl-8-ribityllumazine by condensation of 5-amino-6-(D-ribitylamino)uracil with 3,4-dihydroxy-2-butanone 4-phosphate. This is the penultimate step in the biosynthesis of riboflavin. The polypeptide is 6,7-dimethyl-8-ribityllumazine synthase (Thermoanaerobacter pseudethanolicus (strain ATCC 33223 / 39E) (Clostridium thermohydrosulfuricum)).